Here is a 235-residue protein sequence, read N- to C-terminus: MNKLTLLHEGKAKKVWQTDDPDLIIQEFKDDATAFNNKKKGSIADKGVTNNAIASRLFTMLGENGIPTHFVSKLNDRDMLCKKLDILLIEVVTRNVAAGSLVRRYGFAEGTVLEKPIVELYLKNDDLDDPLMNEDHAVALGLGTYEEVAQLKDMAEKINSLLVPWFAERKLRLVDFKLEFGRHKGEILLGDEISPDTCRFWDAESGEKLDKDRFRLDLGGVEDAYSEVKRRVLEQ.

Belongs to the SAICAR synthetase family.

The enzyme catalyses 5-amino-1-(5-phospho-D-ribosyl)imidazole-4-carboxylate + L-aspartate + ATP = (2S)-2-[5-amino-1-(5-phospho-beta-D-ribosyl)imidazole-4-carboxamido]succinate + ADP + phosphate + 2 H(+). The protein operates within purine metabolism; IMP biosynthesis via de novo pathway; 5-amino-1-(5-phospho-D-ribosyl)imidazole-4-carboxamide from 5-amino-1-(5-phospho-D-ribosyl)imidazole-4-carboxylate: step 1/2. This chain is Phosphoribosylaminoimidazole-succinocarboxamide synthase, found in Chlorobaculum parvum (strain DSM 263 / NCIMB 8327) (Chlorobium vibrioforme subsp. thiosulfatophilum).